Consider the following 134-residue polypeptide: Beta-synuclein (134 aa).

2 tandem repeats follow at residues 20 to 30 (EKTKQGVTEAA) and 31 to 41 (EKTKEGVLYVG). The segment at 20 to 67 (EKTKQGVTEAAEKTKEGVLYVGSKTKEGVVQGVASVAEKTKEQASHLG) is 4 X 11 AA tandem repeats of [EGS]-K-T-K-[EQ]-[GQ]-V-X(4). One copy of the 3; approximate repeat lies at 42 to 56 (SKTKEGVVQGVASVA). Repeat 4 spans residues 57–67 (EKTKEQASHLG). Residues 97–134 (EVAQEAAEEPLIEPLMEPEGESYEEQPQEEYQEYEPEA) form a disordered region. The segment covering 98-134 (VAQEAAEEPLIEPLMEPEGESYEEQPQEEYQEYEPEA) has biased composition (acidic residues). The residue at position 118 (serine 118) is a Phosphoserine; by BARK1, CK2 and GRK5.

This sequence belongs to the synuclein family. In terms of processing, phosphorylated. Phosphorylation by G-protein coupled receptor kinases (GRK) is more efficient than phosphorylation by CK1, CK2 and CaM-kinase II. As to expression, specifically present in synapses around neurons but not in glial cells.

It is found in the cytoplasm. Its function is as follows. May be involved in neuronal plasticity. The polypeptide is Beta-synuclein (SNCB) (Bos taurus (Bovine)).